We begin with the raw amino-acid sequence, 377 residues long: Succinyl-diaminopimelate desuccinylase (377 aa).

His68 is a Zn(2+) binding site. The active site involves Asp70. Zn(2+) is bound at residue Asp101. The active-site Proton acceptor is the Glu135. Glu136, Glu164, and His350 together coordinate Zn(2+).

It belongs to the peptidase M20A family. DapE subfamily. In terms of assembly, homodimer. The cofactor is Zn(2+). It depends on Co(2+) as a cofactor.

It catalyses the reaction N-succinyl-(2S,6S)-2,6-diaminopimelate + H2O = (2S,6S)-2,6-diaminopimelate + succinate. It participates in amino-acid biosynthesis; L-lysine biosynthesis via DAP pathway; LL-2,6-diaminopimelate from (S)-tetrahydrodipicolinate (succinylase route): step 3/3. Its function is as follows. Catalyzes the hydrolysis of N-succinyl-L,L-diaminopimelic acid (SDAP), forming succinate and LL-2,6-diaminopimelate (DAP), an intermediate involved in the bacterial biosynthesis of lysine and meso-diaminopimelic acid, an essential component of bacterial cell walls. The sequence is that of Succinyl-diaminopimelate desuccinylase from Aliivibrio salmonicida (strain LFI1238) (Vibrio salmonicida (strain LFI1238)).